The sequence spans 259 residues: Expansin-B4 (259 aa).

The signal sequence occupies residues 1–23 (MASSQRYFALLALFAVSLKFCYC). Asn-25 carries an N-linked (GlcNAc...) asparagine glycan. The region spanning 51-161 (GGACGYGSAV…KRAACLYRGT (111 aa)) is the Expansin-like EG45 domain. Disulfide bonds link Cys-54-Cys-83, Cys-86-Cys-156, and Cys-91-Cys-97. The Expansin-like CBD domain occupies 174–255 (YYISFVVEYE…NWKPDESYRS (82 aa)).

Belongs to the expansin family. Expansin B subfamily.

It is found in the secreted. The protein resides in the cell wall. The protein localises to the membrane. Its function is as follows. May cause loosening and extension of plant cell walls by disrupting non-covalent bonding between cellulose microfibrils and matrix glucans. No enzymatic activity has been found. The polypeptide is Expansin-B4 (EXPB4) (Arabidopsis thaliana (Mouse-ear cress)).